The following is a 529-amino-acid chain: NADPH-dependent thioredoxin reductase 3 (529 aa).

Residues 1 to 67 (MAASPKIGIG…SSDSLRLRVS (67 aa)) constitute a chloroplast transit peptide. Positions 54–78 (TRTRSSDSLRLRVSATANSPSSSSS) are disordered. The span at 64-78 (LRVSATANSPSSSSS) shows a compositional bias: low complexity. Residues 91–94 (SGPA), 113–120 (EGYQMGGV), asparagine 133, valine 166, and cysteine 220 contribute to the FAD site. Cysteine 217 and cysteine 220 are joined by a disulfide. Threonine 240, arginine 265, isoleucine 324, and tyrosine 344 together coordinate NADP(+). FAD is bound by residues aspartate 364 and 371 to 374 (RQAV). Arginine 371 provides a ligand contact to NADP(+). The region spanning 403–529 (PQTEEAKKEF…EYREFIEANK (127 aa)) is the Thioredoxin domain. Active-site nucleophile residues include cysteine 454 and cysteine 457. Cysteine 454 and cysteine 457 are oxidised to a cystine.

Belongs to the class-II pyridine nucleotide-disulfide oxidoreductase family. As to quaternary structure, may homodimerize. Interacts with the 2-Cys peroxiredoxin BAS1. The cofactor is FAD.

The protein localises to the plastid. It is found in the chloroplast. It catalyses the reaction [thioredoxin]-dithiol + NADP(+) = [thioredoxin]-disulfide + NADPH + H(+). Thioredoxin reductase (TR) that exhibits both TR and thioredoxin (Trx) activities. Contains a C-terminal functional Trx domain. Functions as an electron donor for plastidial 2-Cys peroxiredoxins and participates in a NADPH-dependent hydrogen peroxide scavenging system in chloroplasts in the dark. Required for chlorophyll biosynthesis and biogenesis of the photosynthetic apparatus. Activates aerobic cyclase which converts Mg-protoporhyrin monomethyl ester into protochlorophyllide. Involved in a light-dependent regulation of starch biosynthesis by redox activation of the ADP-glucose pyrophosphorylase (AGPase), a central enzyme of starch synthesis. The chain is NADPH-dependent thioredoxin reductase 3 from Arabidopsis thaliana (Mouse-ear cress).